Here is a 512-residue protein sequence, read N- to C-terminus: MAHIRADEITSILRQEIENYERAIDVSEVGSVISVGDGIARIHGLEKVMAGELIEFPHDVAGIAMNLEEDQVGAVLLGDYTLIKEGDEVKRTKRIMSVPVGEALIGRVVNALGQPIDGKGPINATQFNPIERLAPGVVARQPVKEPMMTGIKAVDAMIPIGRGQRELIIGDRQTGKTAIALDAIINQKGGDMICIYVAIGQKRSTVAQVVKTLEDNGAMEYSIVVVASASDPAPMQYLAPFSGCAIGEYFRDSKRHALCIYDDLSKHAAAYREISLLLRRPPGREAFPGDVFYLHSRLLERAAKLNNEHGAGSLTALPFIETQAGDVSAYIPTNVISITDGQIFLEADLFNSNQRPAINVGISVSRVGGNAQTKAMKSIAGGLRLDLAQYRELAAFAQFGSDLDKSSQAQLNRGRHLVEILKQDQYQPLPLEKQIMIIWAGTKGYLDDIPVELCRKFEAELYRFSENAHRPVLDEIKTKKALDPDLTAKVKGIVEEFKGRFMAENAPAKAHA.

An ATP-binding site is contributed by 170 to 177 (GDRQTGKT).

This sequence belongs to the ATPase alpha/beta chains family. In terms of assembly, F-type ATPases have 2 components, CF(1) - the catalytic core - and CF(0) - the membrane proton channel. CF(1) has five subunits: alpha(3), beta(3), gamma(1), delta(1), epsilon(1). CF(0) has three main subunits: a(1), b(2) and c(9-12). The alpha and beta chains form an alternating ring which encloses part of the gamma chain. CF(1) is attached to CF(0) by a central stalk formed by the gamma and epsilon chains, while a peripheral stalk is formed by the delta and b chains.

Its subcellular location is the cell inner membrane. It carries out the reaction ATP + H2O + 4 H(+)(in) = ADP + phosphate + 5 H(+)(out). In terms of biological role, produces ATP from ADP in the presence of a proton gradient across the membrane. The alpha chain is a regulatory subunit. In Solibacter usitatus (strain Ellin6076), this protein is ATP synthase subunit alpha.